Here is a 951-residue protein sequence, read N- to C-terminus: Translation initiation factor IF-2 (951 aa).

2 disordered regions span residues 58–255 and 305–329; these read AERK…AVVI and DVSR…KSLS. The segment covering 101 to 170 has biased composition (low complexity); the sequence is AEPQYAEPQQ…PQAQPAQPAA (70 aa). Pro residues predominate over residues 171 to 216; that stretch reads PVAPPAPSAQPSAPQPPAAQPRPPQPPMPSRPPPAGYRPAPPPGAR. The span at 217-234 shows a compositional bias: low complexity; sequence PPMSAAPGAPAQPGAAGQ. Positions 450 to 619 constitute a tr-type G domain; it reads IRPPVVTVMG…ALQSEVLELK (170 aa). Residues 459–466 form a G1 region; it reads GHVDHGKT. 459–466 contributes to the GTP binding site; sequence GHVDHGKT. Residues 484-488 form a G2 region; the sequence is GITQH. Residues 505–508 form a G3 region; that stretch reads DTPG. GTP is bound by residues 505 to 509 and 559 to 562; these read DTPGH and NKVD. Residues 559–562 are G4; sequence NKVD. The segment at 595 to 597 is G5; the sequence is SAR.

The protein belongs to the TRAFAC class translation factor GTPase superfamily. Classic translation factor GTPase family. IF-2 subfamily.

The protein localises to the cytoplasm. Its function is as follows. One of the essential components for the initiation of protein synthesis. Protects formylmethionyl-tRNA from spontaneous hydrolysis and promotes its binding to the 30S ribosomal subunits. Also involved in the hydrolysis of GTP during the formation of the 70S ribosomal complex. This is Translation initiation factor IF-2 from Anaeromyxobacter dehalogenans (strain 2CP-1 / ATCC BAA-258).